Reading from the N-terminus, the 195-residue chain is Recombination protein RecR (195 aa).

The segment at 56–71 adopts a C4-type zinc-finger fold; the sequence is CRQCHSFSDDDICPIC. A Toprim domain is found at 79-174; the sequence is SVLCVVETAA…KVTRIAQGIP (96 aa).

It belongs to the RecR family.

Its function is as follows. May play a role in DNA repair. It seems to be involved in an RecBC-independent recombinational process of DNA repair. It may act with RecF and RecO. The sequence is that of Recombination protein RecR from Psychrobacter sp. (strain PRwf-1).